The following is a 318-amino-acid chain: Forkhead box protein I2 (318 aa).

Residues 1 to 30 (MATYCDDLGPSSAPPGQAQATAHPPGYEPG) form a disordered region. A DNA-binding region (fork-head) is located at residues 102-196 (RPPYSYSALI…DNGNFRRKRK (95 aa)).

It localises to the nucleus. Possible transcriptional activator. The polypeptide is Forkhead box protein I2 (FOXI2) (Homo sapiens (Human)).